A 221-amino-acid polypeptide reads, in one-letter code: Molybdenum cofactor guanylyltransferase (221 aa).

GTP-binding positions include 18-20 (IAG), K35, N63, D81, and D112. D112 serves as a coordination point for Mg(2+).

It belongs to the MobA family. As to quaternary structure, monomer. The cofactor is Mg(2+).

It localises to the cytoplasm. It catalyses the reaction Mo-molybdopterin + GTP + H(+) = Mo-molybdopterin guanine dinucleotide + diphosphate. Functionally, transfers a GMP moiety from GTP to Mo-molybdopterin (Mo-MPT) cofactor (Moco or molybdenum cofactor) to form Mo-molybdopterin guanine dinucleotide (Mo-MGD) cofactor. The polypeptide is Molybdenum cofactor guanylyltransferase (Brucella abortus (strain S19)).